A 118-amino-acid chain; its full sequence is uncharacterized protein (118 aa).

Positions 25–85 (AEQPGSGGIA…SSSSTPSRAR (61 aa)) are disordered. Over residues 71-83 (RPSASSSSSTPSR) the composition is skewed to low complexity.

This is an uncharacterized protein from Azospirillum brasilense.